A 219-amino-acid polypeptide reads, in one-letter code: Intraflagellar transport protein 22 (219 aa).

Residues 12 to 19 (GPSKSGKS) and 72 to 79 (WDVGGSSK) each bind GTP.

This sequence belongs to the small GTPase superfamily. Rab family.

The protein resides in the cytoplasm. The protein localises to the cytoskeleton. Its subcellular location is the flagellum basal body. It localises to the cell projection. It is found in the cilium. The protein resides in the flagellum. Functionally, required for flagellum formation. The polypeptide is Intraflagellar transport protein 22 (IFT22) (Trypanosoma brucei brucei (strain 927/4 GUTat10.1)).